Reading from the N-terminus, the 199-residue chain is MRPVKLVIVGDGAVGKTCMLISYTTNAFPNEYIPTVFENYNSSLVVDDVKINLGLWDTAGQEDYDRLRPLSYPSTDVFLVCFSVIAPASYENVEGKWKPEIDQHCPNVPIILVGTKIDIRDDPEQVKRLAEKNIVPIQPPQGDELAKKIGAVKYIECSALTQANLKLVFEEAVRAVLAKAAKEPTGKKEKGGKKGCSLF.

The GTP site is built by Ala-13, Gly-15, Lys-16, Thr-17, Cys-18, Tyr-32, and Thr-35. Thr-17 serves as a coordination point for Mg(2+). 2 short sequence motifs (switch) span residues 26–37 (NAFPNEYIPTVF) and 57–75 (DTAG…YPST). Position 35 (Thr-35) interacts with Mg(2+). GTP contacts are provided by Lys-116, Asp-118, and Ala-159. The residue at position 196 (Cys-196) is a Cysteine methyl ester. A lipid anchor (S-geranylgeranyl cysteine) is attached at Cys-196. Residues 197–199 (SLF) constitute a propeptide, removed in mature form.

This sequence belongs to the small GTPase superfamily. Rho family. Requires Mg(2+) as cofactor.

It localises to the cell membrane. It is found in the cytoplasm. The protein localises to the cytoskeleton. It carries out the reaction GTP + H2O = GDP + phosphate + H(+). Regulated by guanine nucleotide exchange factors (GEFs) which promote the exchange of bound GDP for free GTP, GTPase activating proteins (GAPs) which increase the GTP hydrolysis activity, and GDP dissociation inhibitors which inhibit the dissociation of the nucleotide from the GTPase. Small GTPase which cycles between active GTP-bound and inactive GDP-bound states. Involved in actin cytoskeleton remodeling during capping of surface receptors and uroid formation. The protein is Rho-related protein racG of Entamoeba histolytica (strain ATCC 30459 / HM-1:IMSS / ABRM).